The following is a 409-amino-acid chain: DNA polymerase IV 2 (409 aa).

One can recognise a UmuC domain in the interval 5 to 190 (IFMVDMESFF…LPIECLYGVG (186 aa)). Residues Asp9 and Asp105 each coordinate Mg(2+). Residue Glu106 is part of the active site.

Belongs to the DNA polymerase type-Y family. As to quaternary structure, monomer. It depends on Mg(2+) as a cofactor.

The protein localises to the cytoplasm. It carries out the reaction DNA(n) + a 2'-deoxyribonucleoside 5'-triphosphate = DNA(n+1) + diphosphate. Poorly processive, error-prone DNA polymerase involved in untargeted mutagenesis. Copies undamaged DNA at stalled replication forks, which arise in vivo from mismatched or misaligned primer ends. These misaligned primers can be extended by PolIV. Exhibits no 3'-5' exonuclease (proofreading) activity. May be involved in translesional synthesis, in conjunction with the beta clamp from PolIII. In Halalkalibacterium halodurans (strain ATCC BAA-125 / DSM 18197 / FERM 7344 / JCM 9153 / C-125) (Bacillus halodurans), this protein is DNA polymerase IV 2 (dinB2).